The primary structure comprises 588 residues: Probable catabolite repression protein creC (588 aa).

WD repeat units follow at residues 249–289 (VCNS…ALFT), 323–364 (LANQ…DIFR), 365–404 (SYYG…IVAR), and 407–451 (GHNS…LHRP). The interval 452–499 (RAHQASTRQRTSMITSNSQHASRHRADSAGNRARSDSQRTADGYDEYD) is disordered. The segment covering 455 to 471 (QASTRQRTSMITSNSQH) has biased composition (polar residues). A WD 5 repeat occupies 523–560 (IGSDPICWLGFQEDSIMTSSLEGHIRTWDRPREGINDT). The segment at 569–588 (AISAGAGSGSAVANSARGSL) is disordered.

The protein belongs to the WD repeat creC family. Interacts with creB.

Component of the regulatory network controlling carbon source utilization through ubiquitination and deubiquitination involving creA, creB, creC, creD and acrB. Required to prevent the proteolysis of the CreB deubiquitinating enzyme in the absence of carbon catabolite repression. CreB deubiquitinating enzyme stabilized in a complex with the CreC leads to the expression of genes such as those in the proline and quinate pathways. The protein is Probable catabolite repression protein creC (creC) of Aspergillus terreus (strain NIH 2624 / FGSC A1156).